The sequence spans 300 residues: Type 1 fimbrin D-mannose specific adhesin (300 aa).

An N-terminal signal peptide occupies residues 1–21 (MKRVITLFAVLLMGWSVNAWS).

It belongs to the fimbrial protein family.

It localises to the fimbrium. Involved in regulation of length and mediation of adhesion of type 1 fimbriae (but not necessary for the production of fimbriae). Adhesin responsible for the binding to D-mannose. It is laterally positioned at intervals in the structure of the type 1 fimbriae. In order to integrate FimH in the fimbriae FimF and FimG are needed. This is Type 1 fimbrin D-mannose specific adhesin (fimH) from Escherichia coli (strain K12).